The following is a 199-amino-acid chain: Recombination protein RecR (199 aa).

Residues 58–73 (CSRCFYFTEEDPCPLC) form a C4-type zinc finger. In terms of domain architecture, Toprim spans 81 to 176 (QLICVVEEPQ…KVTRLAHGIP (96 aa)).

Belongs to the RecR family.

In terms of biological role, may play a role in DNA repair. It seems to be involved in an RecBC-independent recombinational process of DNA repair. It may act with RecF and RecO. In Syntrophotalea carbinolica (strain DSM 2380 / NBRC 103641 / GraBd1) (Pelobacter carbinolicus), this protein is Recombination protein RecR.